The sequence spans 228 residues: MKSTRPFHPTPVITIDGPTASGKGTVAALVAAHLGFHLLDSGALYRLAALASIRYQVEPDDADALASLVDGLHITFREGCAQLDGVDVSDEIRAEAVGNRASAIAVHASVRAALVARQRAFRKTPGLVADGRDMGTLIFPDAVLKVFLTASVEARAARRHKQLMQKGFSANIDNLLQDLRERDARDSNRAAAPLKPAADAKPLDTSALTIEQSVEQVLAWYRELGQPA.

Glycine 17–threonine 25 lines the ATP pocket.

It belongs to the cytidylate kinase family. Type 1 subfamily.

The protein resides in the cytoplasm. It carries out the reaction CMP + ATP = CDP + ADP. The catalysed reaction is dCMP + ATP = dCDP + ADP. The polypeptide is Cytidylate kinase (Burkholderia mallei (strain NCTC 10247)).